Reading from the N-terminus, the 473-residue chain is Photosystem II CP43 reaction center protein (473 aa).

Positions 1 to 14 (MKTLYSLRRFYPVE) are excised as a propeptide. Thr15 carries the N-acetylthreonine modification. Thr15 bears the Phosphothreonine mark. 5 consecutive transmembrane segments (helical) span residues 69–93 (LFEV…PHLA), 134–155 (LLGP…KDRN), 178–200 (KALY…RKIT), 255–275 (KPFA…LSYS), and 291–312 (WFNN…ASQA). Glu367 is a [CaMn4O5] cluster binding site. The helical transmembrane segment at 447-471 (RARAAAAGFEKGIDRDFEPVLSMTP) threads the bilayer.

Belongs to the PsbB/PsbC family. PsbC subfamily. PSII is composed of 1 copy each of membrane proteins PsbA, PsbB, PsbC, PsbD, PsbE, PsbF, PsbH, PsbI, PsbJ, PsbK, PsbL, PsbM, PsbT, PsbX, PsbY, PsbZ, Psb30/Ycf12, at least 3 peripheral proteins of the oxygen-evolving complex and a large number of cofactors. It forms dimeric complexes. It depends on Binds multiple chlorophylls and provides some of the ligands for the Ca-4Mn-5O cluster of the oxygen-evolving complex. It may also provide a ligand for a Cl- that is required for oxygen evolution. PSII binds additional chlorophylls, carotenoids and specific lipids. as a cofactor.

The protein localises to the plastid. It is found in the chloroplast thylakoid membrane. Its function is as follows. One of the components of the core complex of photosystem II (PSII). It binds chlorophyll and helps catalyze the primary light-induced photochemical processes of PSII. PSII is a light-driven water:plastoquinone oxidoreductase, using light energy to abstract electrons from H(2)O, generating O(2) and a proton gradient subsequently used for ATP formation. This chain is Photosystem II CP43 reaction center protein, found in Calycanthus floridus var. glaucus (Eastern sweetshrub).